The chain runs to 546 residues: MATTQVEIQRPIANFSPSLWGDQFIKNDSGAKAAEKHCKAVEELKKEVMNMITAAESNLVEAMNLIDTLERLGISYHFEKEIDQKLNHFFSLNTDYSDESYDLYTVSLHFRLFRQHGHRISSDIFGRWIDESGKFKEGLKTDGKGLLSLYEASYLRTRGETILDDALEFATATLNSIAPHLESPLSKQVVHALIQPLHYGNPRIEAHNFISIYEENQDKNEFLLKFAKLDYNLLQMLHKEELHEVSRWWKELDLVSKLPYARDRVVECFFWAMGVYHEPQYSRARIMLTKTITMTSIIDDTYDAYGVIEELDIFTEAIERWNIEEMDRLPEYVKPFYKALLELYEQFEEELAEEGRSYAAHYAIESLKELVRSYHVEAKWFIQGYLPPFEEYLKNALITCTYCYHTTTSLLGVESAVEEDFQWLAKKPKMLVAGLLICRVIDDIATYEVEKERGQSATGIESYMRDNNATIEEAVAKFFEIATDAWKDINEECLMPSPYSRDVLMRILNLERIIDVTYKGNEDGYTQPEKVLKPHIIALFVDPIKM.

Mg(2+) contacts are provided by D299, D303, D442, T446, and E450. Positions 299–303 (DDTYD) match the DDXXD motif motif.

It belongs to the terpene synthase family. Tpsa subfamily. Monomer. Mg(2+) is required as a cofactor. As to expression, highly expressed in flowers and at lower levels in leaves.

It catalyses the reaction (2E,6E)-farnesyl diphosphate = (-)-5-epi-eremophilene + diphosphate. The protein operates within secondary metabolite biosynthesis; terpenoid biosynthesis. Functionally, sesquiterpene synthase that catalyzes the conversion of farnesyl diphosphate to (-)-5-epi-eremophilene. This chain is (-)-5-epieremophilene synthase STPS3, found in Salvia miltiorrhiza (Chinese sage).